The chain runs to 92 residues: MARSQKKGPFVDLHLLKKVDAVRATSDKRPIKTWSRRSTILPDFIGLTIAVHNGRTHVPVYVSENMVGHKLGEFSLTRTFKGHAADKKAKKK.

Belongs to the universal ribosomal protein uS19 family.

Its function is as follows. Protein S19 forms a complex with S13 that binds strongly to the 16S ribosomal RNA. This chain is Small ribosomal subunit protein uS19, found in Chromobacterium violaceum (strain ATCC 12472 / DSM 30191 / JCM 1249 / CCUG 213 / NBRC 12614 / NCIMB 9131 / NCTC 9757 / MK).